A 131-amino-acid polypeptide reads, in one-letter code: NADH-quinone oxidoreductase subunit I 2 (131 aa).

4Fe-4S ferredoxin-type domains lie at L42–G71 and E81–E110. Residues C51, C54, C57, C61, C90, C93, C96, and C100 each coordinate [4Fe-4S] cluster.

The protein belongs to the complex I 23 kDa subunit family. As to quaternary structure, NDH-1 is composed of 14 different subunits. Subunits NuoA, H, J, K, L, M, N constitute the membrane sector of the complex. The cofactor is [4Fe-4S] cluster.

It is found in the cell inner membrane. It catalyses the reaction a quinone + NADH + 5 H(+)(in) = a quinol + NAD(+) + 4 H(+)(out). NDH-1 shuttles electrons from NADH, via FMN and iron-sulfur (Fe-S) centers, to quinones in the respiratory chain. The immediate electron acceptor for the enzyme in this species is believed to be ubiquinone. Couples the redox reaction to proton translocation (for every two electrons transferred, four hydrogen ions are translocated across the cytoplasmic membrane), and thus conserves the redox energy in a proton gradient. In Geobacter metallireducens (strain ATCC 53774 / DSM 7210 / GS-15), this protein is NADH-quinone oxidoreductase subunit I 2.